Consider the following 49-residue polypeptide: Disintegrin eristostatin (49 aa).

In terms of domain architecture, Disintegrin spans 1-49 (QEEPCATGPCCRRCKFKRAGKVCRVARGDWNDDYCTGKSCDCPKNPWNG). 4 disulfide bridges follow: Cys-5-Cys-14, Cys-10-Cys-35, Cys-11-Cys-40, and Cys-23-Cys-42. Positions 27-29 (RGD) match the Cell attachment site motif.

This sequence belongs to the venom metalloproteinase (M12B) family. P-II subfamily. P-IIa sub-subfamily. As to quaternary structure, monomer. Expressed by the venom gland.

The protein localises to the secreted. Functionally, is a potent inhibitor of ADP-induced platelet aggregation. Acts by binding to alpha-IIb/beta-3 (ITGA2B/ITGB3) receptor on the platelet surface. Binds with the same high affinity to resting and activated platelets. Also binds the alpha-4/beta-1 (ITGA4/ITGB1) integrin. Is a potent inhibitor of human and murine melanoma metastases in mouse model systems, also due to the inhibition of binding between the alpha-4/beta-1 integrin and the vascular cell adhesion protein VCAM1. Reacts neither with the integrin alpha-V/beta-3 (ITGAV/ITGB3) vitronectin receptor nor with the integrin alpha-5/beta-1 (ITGA5/ITGB1) fibronectin receptor. Has no effect on cell proliferation or angiogenesis. Specifically inhibits cell migration on fibronectin, but not that on collagen IV or laminin. May involve fibronectin-binding integrins that mediate cell migration. The protein is Disintegrin eristostatin of Eristicophis macmahoni (Leaf-nosed viper).